The sequence spans 140 residues: Putative pre-16S rRNA nuclease (140 aa).

The protein belongs to the YqgF nuclease family.

The protein localises to the cytoplasm. In terms of biological role, could be a nuclease involved in processing of the 5'-end of pre-16S rRNA. This chain is Putative pre-16S rRNA nuclease, found in Endomicrobium trichonymphae.